The following is a 379-amino-acid chain: uncharacterized protein (379 aa).

This is an uncharacterized protein from Shouchella clausii (Alkalihalobacillus clausii).